Consider the following 280-residue polypeptide: Ribosomal RNA small subunit methyltransferase A (280 aa).

S-adenosyl-L-methionine contacts are provided by H13, L15, G40, E61, D85, and N105.

Belongs to the class I-like SAM-binding methyltransferase superfamily. rRNA adenine N(6)-methyltransferase family. RsmA subfamily.

It is found in the cytoplasm. The catalysed reaction is adenosine(1518)/adenosine(1519) in 16S rRNA + 4 S-adenosyl-L-methionine = N(6)-dimethyladenosine(1518)/N(6)-dimethyladenosine(1519) in 16S rRNA + 4 S-adenosyl-L-homocysteine + 4 H(+). In terms of biological role, specifically dimethylates two adjacent adenosines (A1518 and A1519) in the loop of a conserved hairpin near the 3'-end of 16S rRNA in the 30S particle. May play a critical role in biogenesis of 30S subunits. The polypeptide is Ribosomal RNA small subunit methyltransferase A (Phocaeicola vulgatus (strain ATCC 8482 / DSM 1447 / JCM 5826 / CCUG 4940 / NBRC 14291 / NCTC 11154) (Bacteroides vulgatus)).